The following is a 360-amino-acid chain: Magnesium transporter NIPA2 (360 aa).

At 1-9 (MSQGRGKYD) the chain is on the extracellular side. Residues 10 to 30 (FYIGLGLAMSSSIFIGGSFIL) traverse the membrane as a helical segment. The Cytoplasmic segment spans residues 31-56 (KKKGLLRLARKGSMRAGQGGHAYLKE). Residues 57-77 (WLWWAGLLSMGAGEVANFAAY) traverse the membrane as a helical segment. Position 78 (Ala-78) is a topological domain, extracellular. The helical transmembrane segment at 79–99 (FAPATLVTPLGALSVLVSAIL) threads the bilayer. Residues 100 to 107 (SSYFLNER) are Cytoplasmic-facing. Residues 108 to 128 (LNLHGKIGCLLSILGSTVMVI) traverse the membrane as a helical segment. Residues 129-149 (HAPKEEEIETLNEMSHKLGDP) lie on the Extracellular side of the membrane. Residues 150-170 (GFVVFATLVVIVALILIFVVG) form a helical membrane-spanning segment. Topologically, residues 171 to 175 (PRHGQ) are cytoplasmic. A helical transmembrane segment spans residues 176–196 (TNILVYITICSVIGAFSVSCV). The Extracellular portion of the chain corresponds to 197-215 (KGLGIAIKELFAGKPVLRH). A helical transmembrane segment spans residues 216-236 (PLAWILLLSLIVCVSTQINYL). Residues 237–246 (NRALDIFNTS) lie on the Cytoplasmic side of the membrane. The helical transmembrane segment at 247 to 267 (IVTPIYYVFFTTSVLTCSAIL) threads the bilayer. The Extracellular segment spans residues 268 to 278 (FKEWQDMPVDD). A helical transmembrane segment spans residues 279 to 299 (VIGTLSGFFTIIVGIFLLHAF). The Cytoplasmic portion of the chain corresponds to 300–360 (KDVSFSLASL…SRRNGNLTAF (61 aa)).

This sequence belongs to the NIPA family. In terms of tissue distribution, widely expressed.

The protein localises to the cell membrane. Its subcellular location is the early endosome. It carries out the reaction Mg(2+)(in) = Mg(2+)(out). Functionally, acts as a selective Mg(2+) transporter. In Homo sapiens (Human), this protein is Magnesium transporter NIPA2 (NIPA2).